A 406-amino-acid chain; its full sequence is Putative nickel insertion protein (406 aa).

Belongs to the LarC family.

The chain is Putative nickel insertion protein from Thermomicrobium roseum (strain ATCC 27502 / DSM 5159 / P-2).